The primary structure comprises 350 residues: Heat-inducible transcription repressor HrcA (350 aa).

It belongs to the HrcA family.

Negative regulator of class I heat shock genes (grpE-dnaK-dnaJ and groELS operons). Prevents heat-shock induction of these operons. This Xanthomonas oryzae pv. oryzae (strain KACC10331 / KXO85) protein is Heat-inducible transcription repressor HrcA.